An 84-amino-acid chain; its full sequence is Sporulation-specific transcription factor SpoVIF (84 aa).

The protein localises to the cytoplasm. In terms of biological role, transcription factor involved in spore coat assembly and spore resistance. Required for gene regulation during the latter stages of sporulation. Regulates the transcription of at least cgeA, cotG and cotS. May directly or indirectly control the function of the GerE protein. This Bacillus subtilis (strain 168) protein is Sporulation-specific transcription factor SpoVIF.